The primary structure comprises 270 residues: MFRIGIVGAGAIGKEIARAIDNGTVPAKLEAIYDRDTAEATSFAASLKSKPRVLPLEELVEASNFVVEAAAQSAVREVAIAALSRSRSVMIMSVGALADKELLETIRTMAKEHCCSIYLPSGAIGGLDAVKAASICKIDSVTITTRKPRDGLRGAPFIVRNNIDVDSMDEPTEIFSGPAAVAIKEFPANVNVAASLSLVGIGFERTLVRVVVDPTIKRNIHEISVRGEFGELHTVVENVPARSNPKTSFLAALSAIATLRQVCEPLKIGT.

Ala-123 and Asn-191 together coordinate NAD(+). His-221 is a catalytic residue.

Belongs to the L-aspartate dehydrogenase family.

The catalysed reaction is L-aspartate + NADP(+) + H2O = oxaloacetate + NH4(+) + NADPH + H(+). It carries out the reaction L-aspartate + NAD(+) + H2O = oxaloacetate + NH4(+) + NADH + H(+). It participates in cofactor biosynthesis; NAD(+) biosynthesis; iminoaspartate from L-aspartate (dehydrogenase route): step 1/1. Its function is as follows. Specifically catalyzes the NAD or NADP-dependent dehydrogenation of L-aspartate to iminoaspartate. In Methanocella arvoryzae (strain DSM 22066 / NBRC 105507 / MRE50), this protein is L-aspartate dehydrogenase.